The sequence spans 202 residues: 3-isopropylmalate dehydratase small subunit (202 aa).

This sequence belongs to the LeuD family. LeuD type 1 subfamily. As to quaternary structure, heterodimer of LeuC and LeuD.

It carries out the reaction (2R,3S)-3-isopropylmalate = (2S)-2-isopropylmalate. The protein operates within amino-acid biosynthesis; L-leucine biosynthesis; L-leucine from 3-methyl-2-oxobutanoate: step 2/4. In terms of biological role, catalyzes the isomerization between 2-isopropylmalate and 3-isopropylmalate, via the formation of 2-isopropylmaleate. This Nocardia farcinica (strain IFM 10152) protein is 3-isopropylmalate dehydratase small subunit.